A 138-amino-acid chain; its full sequence is Large ribosomal subunit protein bL17 (138 aa).

Belongs to the bacterial ribosomal protein bL17 family. Part of the 50S ribosomal subunit. Contacts protein L32.

This is Large ribosomal subunit protein bL17 from Solidesulfovibrio magneticus (strain ATCC 700980 / DSM 13731 / RS-1) (Desulfovibrio magneticus).